Here is a 441-residue protein sequence, read N- to C-terminus: NADH-quinone oxidoreductase subunit D 1 (441 aa).

The protein belongs to the complex I 49 kDa subunit family. In terms of assembly, NDH-1 is composed of 14 different subunits. Subunits NuoB, C, D, E, F, and G constitute the peripheral sector of the complex.

The protein localises to the cell membrane. The catalysed reaction is a quinone + NADH + 5 H(+)(in) = a quinol + NAD(+) + 4 H(+)(out). Functionally, NDH-1 shuttles electrons from NADH, via FMN and iron-sulfur (Fe-S) centers, to quinones in the respiratory chain. The immediate electron acceptor for the enzyme in this species is believed to be a menaquinone. Couples the redox reaction to proton translocation (for every two electrons transferred, four hydrogen ions are translocated across the cytoplasmic membrane), and thus conserves the redox energy in a proton gradient. This Salinispora tropica (strain ATCC BAA-916 / DSM 44818 / JCM 13857 / NBRC 105044 / CNB-440) protein is NADH-quinone oxidoreductase subunit D 1.